The following is a 242-amino-acid chain: Phosphoribosylaminoimidazole-succinocarboxamide synthase (242 aa).

The protein belongs to the SAICAR synthetase family.

It catalyses the reaction 5-amino-1-(5-phospho-D-ribosyl)imidazole-4-carboxylate + L-aspartate + ATP = (2S)-2-[5-amino-1-(5-phospho-beta-D-ribosyl)imidazole-4-carboxamido]succinate + ADP + phosphate + 2 H(+). The protein operates within purine metabolism; IMP biosynthesis via de novo pathway; 5-amino-1-(5-phospho-D-ribosyl)imidazole-4-carboxamide from 5-amino-1-(5-phospho-D-ribosyl)imidazole-4-carboxylate: step 1/2. This chain is Phosphoribosylaminoimidazole-succinocarboxamide synthase (purC), found in Methanocaldococcus jannaschii (strain ATCC 43067 / DSM 2661 / JAL-1 / JCM 10045 / NBRC 100440) (Methanococcus jannaschii).